The chain runs to 528 residues: J domain-containing protein APJ1 (528 aa).

The 70-residue stretch at 4–73 folds into the J domain; the sequence is NTSLYDSLNV…RALYDQYGTT (70 aa). The segment at 193–274 adopts a CR-type zinc-finger fold; it reads GKTAKLGLNR…CQGLGFIKER (82 aa). 4 CXXCXGXG motif repeats span residues 206 to 213, 218 to 225, 246 to 253, and 262 to 269; these read CSVCDGHG, CTCKTCKG, CADCGGAG, and CQQCQGLG. Basic and acidic residues predominate over residues 485 to 499; the sequence is NERDSRKRNNRRFDE. Residues 485-528 are disordered; it reads NERDSRKRNNRRFDESNINNNNETKRNKYSSPVSGFYDHDINGY.

It localises to the cytoplasm. Its subcellular location is the nucleus. Putative chaperone involved in protein folding. Interferes with propagation of [PSI+] prion when overproduced. The polypeptide is J domain-containing protein APJ1 (APJ1) (Saccharomyces cerevisiae (strain ATCC 204508 / S288c) (Baker's yeast)).